The chain runs to 115 residues: Large ribosomal subunit protein bL20 (115 aa).

This sequence belongs to the bacterial ribosomal protein bL20 family.

In terms of biological role, binds directly to 23S ribosomal RNA and is necessary for the in vitro assembly process of the 50S ribosomal subunit. It is not involved in the protein synthesizing functions of that subunit. This chain is Large ribosomal subunit protein bL20, found in Chlorobium phaeobacteroides (strain DSM 266 / SMG 266 / 2430).